The chain runs to 403 residues: Digeranylgeranylglycerophospholipid reductase 1 (403 aa).

FAD is bound by residues alanine 14, aspartate 33, cysteine 44, alanine 45, glycine 47, arginine 98, valine 122, aspartate 277, glycine 289, and isoleucine 290.

Belongs to the geranylgeranyl reductase family. DGGGPL reductase subfamily. Requires FAD as cofactor.

The catalysed reaction is a 2,3-bis-O-phytanyl-sn-glycerol 1-phospholipid + 8 A = a 2,3-bis-O-(geranylgeranyl)-sn-glycerol 1-phospholipid + 8 AH2. It carries out the reaction 2,3-bis-O-(phytanyl)-sn-glycerol 1-phosphate + 8 A = 2,3-bis-O-(geranylgeranyl)-sn-glycerol 1-phosphate + 8 AH2. It catalyses the reaction CDP-2,3-bis-O-(geranylgeranyl)-sn-glycerol + 8 AH2 = CDP-2,3-bis-O-(phytanyl)-sn-glycerol + 8 A. The enzyme catalyses archaetidylserine + 8 AH2 = 2,3-bis-O-phytanyl-sn-glycero-3-phospho-L-serine + 8 A. The protein operates within membrane lipid metabolism; glycerophospholipid metabolism. Functionally, is involved in the reduction of 2,3-digeranylgeranylglycerophospholipids (unsaturated archaeols) into 2,3-diphytanylglycerophospholipids (saturated archaeols) in the biosynthesis of archaeal membrane lipids. Catalyzes the formation of archaetidic acid (2,3-di-O-phytanyl-sn-glyceryl phosphate) from 2,3-di-O-geranylgeranylglyceryl phosphate (DGGGP) via the hydrogenation of each double bond of the isoprenoid chains. Is also probably able to reduce double bonds of geranyl groups in CDP-2,3-bis-O-(geranylgeranyl)-sn-glycerol and archaetidylserine, thus acting at various stages in the biosynthesis of archaeal membrane lipids. The polypeptide is Digeranylgeranylglycerophospholipid reductase 1 (Methanosphaera stadtmanae (strain ATCC 43021 / DSM 3091 / JCM 11832 / MCB-3)).